The sequence spans 73 residues: Adipokinetic prohormone type 2 (73 aa).

The N-terminal stretch at Met1 to Gly20 is a signal peptide. The residue at position 21 (Gln21) is a Pyrrolidone carboxylic acid. Position 30 is an asparagine amide (Asn30). The propeptide occupies Ser34–Met73.

Expressed in corpora cardiaca (CC), corpora allata (CA) and gnathal ganglion (GNG) (at protein level). Expression in CC and CA detected in all animals, expression in GNG detected in few animals (at protein level). Not expressed in antennal lobe (AL) (at protein level).

It localises to the secreted. This hormone, released from cells in the corpora cardiaca, causes release of diglycerides from the fat body and stimulation of muscles to use these diglycerides as an energy source during energy-demanding processes. This chain is Adipokinetic prohormone type 2, found in Agrotis ipsilon (Black cutworm moth).